The following is a 137-amino-acid chain: Phosphomevalonate dehydratase small subunit (137 aa).

The Proton acceptor role is filled by Ser-65.

The protein belongs to the AcnX type II small subunit family. As to quaternary structure, heterodimer composed of a large subunit (PMDh-L) and a small subunit (PMDh-S).

The enzyme catalyses (R)-5-phosphomevalonate = (2E)-3-methyl-5-phosphooxypent-2-enoate + H2O. The protein operates within isoprenoid biosynthesis; isopentenyl diphosphate biosynthesis via mevalonate pathway. Component of a hydro-lyase that catalyzes the dehydration of mevalonate 5-phosphate (MVA5P) to form trans-anhydromevalonate 5-phosphate (tAHMP). Involved in the archaeal mevalonate (MVA) pathway, which provides fundamental precursors for isoprenoid biosynthesis, such as isopentenyl diphosphate (IPP) and dimethylallyl diphosphate (DMAPP). The protein is Phosphomevalonate dehydratase small subunit of Methanococcoides burtonii (strain DSM 6242 / NBRC 107633 / OCM 468 / ACE-M).